The primary structure comprises 357 residues: Alanine racemase (357 aa).

Lys-35 serves as the catalytic Proton acceptor; specific for D-alanine. Position 35 is an N6-(pyridoxal phosphate)lysine (Lys-35). Position 130 (Arg-130) interacts with substrate. Catalysis depends on Tyr-255, which acts as the Proton acceptor; specific for L-alanine. Met-303 contributes to the substrate binding site.

It belongs to the alanine racemase family. Requires pyridoxal 5'-phosphate as cofactor.

The catalysed reaction is L-alanine = D-alanine. It functions in the pathway amino-acid biosynthesis; D-alanine biosynthesis; D-alanine from L-alanine: step 1/1. In terms of biological role, catalyzes the interconversion of L-alanine and D-alanine. May also act on other amino acids. This is Alanine racemase (alr) from Nitrosospira multiformis (strain ATCC 25196 / NCIMB 11849 / C 71).